Reading from the N-terminus, the 425-residue chain is Histone-binding protein RBBP4 (425 aa).

At Ala-2 the chain carries N-acetylalanine. WD repeat units lie at residues 32 to 125, 126 to 175, 176 to 223, 225 to 270, 271 to 314, 315 to 371, and 372 to 404; these read YDLV…NHEG, EVNR…RLRG, HQKE…KTIF, GHTA…HSVD, AHTA…HSFE, SHKD…FIHG, and GHTAKISDFSWNPNEPWVICSVSEDNIMQVWQM.

This sequence belongs to the WD repeat RBAP46/RBAP48/MSI1 family. In terms of assembly, binds directly to histone H4, probably via helix 1 of the histone fold, a region that is not accessible when histone H4 is in chromatin. Forms a large corepressor complex that contains ncor1, sin3a and possibly sin3b, histone deacetylases hdac2, hdac1, rbbp4 and possibly rbbp7.

The protein localises to the nucleus. It is found in the chromosome. The protein resides in the telomere. Its function is as follows. Core histone-binding subunit that may target chromatin assembly factors, chromatin remodeling factors and histone deacetylases to their histone substrates in a manner that is regulated by nucleosomal DNA. Component of several complexes which regulate chromatin metabolism. This Xenopus tropicalis (Western clawed frog) protein is Histone-binding protein RBBP4 (rbbp4).